Here is a 128-residue protein sequence, read N- to C-terminus: 3-aminoacrylate deaminase RutC (128 aa).

It belongs to the RutC family. As to quaternary structure, homotrimer.

It carries out the reaction (Z)-3-aminoacrylate + H2O + H(+) = 3-oxopropanoate + NH4(+). Involved in pyrimidine catabolism. Catalyzes the deamination of 3-aminoacrylate to malonic semialdehyde, a reaction that can also occur spontaneously. RutC may facilitate the reaction and modulate the metabolic fitness, rather than catalyzing essential functions. This is 3-aminoacrylate deaminase RutC from Escherichia coli O103:H2 (strain 12009 / EHEC).